Here is a 650-residue protein sequence, read N- to C-terminus: DNA mismatch repair protein MutL (650 aa).

Disordered regions lie at residues 358–392 (EASQ…QPLV) and 408–448 (QPRP…QSAA). The span at 367-384 (TPQPRPALTPGHPDPPPQ) shows a compositional bias: pro residues. Over residues 430-444 (PYAPIAAAPVPASEP) the composition is skewed to low complexity.

Belongs to the DNA mismatch repair MutL/HexB family.

This protein is involved in the repair of mismatches in DNA. It is required for dam-dependent methyl-directed DNA mismatch repair. May act as a 'molecular matchmaker', a protein that promotes the formation of a stable complex between two or more DNA-binding proteins in an ATP-dependent manner without itself being part of a final effector complex. This Geobacter sp. (strain M21) protein is DNA mismatch repair protein MutL.